The sequence spans 384 residues: Glucans biosynthesis protein C (384 aa).

Transmembrane regions (helical) follow at residues 17–37 (AWLM…THSW), 54–74 (FIHA…SYML), 91–111 (VGIP…ILLQ), 140–160 (LWFL…FTWF), 173–193 (AISL…YAAI), 212–232 (FIVM…LAFI), 240–260 (FTTP…AYLL), 274–294 (TESV…FSLG), 311–331 (ASLF…AYIT), and 338–358 (LIGF…LYEI).

It belongs to the acyltransferase 3 family. OpgC subfamily.

Its subcellular location is the cell membrane. It participates in glycan metabolism; osmoregulated periplasmic glucan (OPG) biosynthesis. Functionally, necessary for the succinyl substitution of periplasmic glucans. Could catalyze the transfer of succinyl residues from the cytoplasmic side of the membrane to the nascent glucan backbones on the periplasmic side of the membrane. The protein is Glucans biosynthesis protein C of Salmonella gallinarum (strain 287/91 / NCTC 13346).